We begin with the raw amino-acid sequence, 509 residues long: Membrane-bound lytic murein transglycosylase F (509 aa).

An N-terminal signal peptide occupies residues 1 to 40 (MLASACTHSWRTGRFLNRIIKSSVQTLTAAALIANLSACS). Residues 41–280 (RPTTLEKIEQ…YLQERYFGHV (240 aa)) are non-LT domain. The tract at residues 281–509 (NQLNYVGART…APFRVTPPML (229 aa)) is LT domain. Glu327 is a catalytic residue. Residues 474–500 (DGSVAQNEDAPTTGADGTTEETPAIPA) are disordered.

The protein in the N-terminal section; belongs to the bacterial solute-binding protein 3 family. This sequence in the C-terminal section; belongs to the transglycosylase Slt family.

The protein resides in the cell outer membrane. The enzyme catalyses Exolytic cleavage of the (1-&gt;4)-beta-glycosidic linkage between N-acetylmuramic acid (MurNAc) and N-acetylglucosamine (GlcNAc) residues in peptidoglycan, from either the reducing or the non-reducing ends of the peptidoglycan chains, with concomitant formation of a 1,6-anhydrobond in the MurNAc residue.. Murein-degrading enzyme that degrades murein glycan strands and insoluble, high-molecular weight murein sacculi, with the concomitant formation of a 1,6-anhydromuramoyl product. Lytic transglycosylases (LTs) play an integral role in the metabolism of the peptidoglycan (PG) sacculus. Their lytic action creates space within the PG sacculus to allow for its expansion as well as for the insertion of various structures such as secretion systems and flagella. The sequence is that of Membrane-bound lytic murein transglycosylase F from Hahella chejuensis (strain KCTC 2396).